The following is an 85-amino-acid chain: UPF0291 protein SpyM3_1470 (85 aa).

The tract at residues 62 to 85 (TPEKLRQVQREKGLHGRSLDDPKS) is disordered.

The protein belongs to the UPF0291 family.

It is found in the cytoplasm. The sequence is that of UPF0291 protein SpyM3_1470 from Streptococcus pyogenes serotype M3 (strain ATCC BAA-595 / MGAS315).